Consider the following 2217-residue polypeptide: MRNWVLIAALAVICLATEQELSHKDRIRAVLRSWSPASQKQFFEPVREQKYRTMEERVIFLDTHHISKRSIAEPHVLAGMATRGCNKPGYTGETCQYPLCSARNPYIPNNDGFDDIAIDAYNLANCSESYIVVVDETMRNIKIEVETASALNPTFYLQAENGDLIFPDESIQLPTMFTANYLHLPPGQYMLGPRADTSEQFCTMMMSSRSSIHVSGGFTSGDQAERSDYPNLKFTYFDTESVVAIHAQGLDFPGQIQAIGFTGAENHISRYIPMTTRFNCTYPYILERYTCRKTSNNDAGHNLIQVEGVTNSGYKFRRIVPYQCVLPPVTTTTPAVPTTPAAPITSCQNGGQLLTDSNGVAYCYCFGLYSGSTCSQMLCANGGFLPTPTSDRCQCPEGFSGFHCQNILCTDMSGFDFNAENPTLTLVIRSRSQLSAVIEQATESVQSIVDLLASEPGYLSKFIVVLFDNGKLLVNRQYDSWDAAMVDLTKAIHSAPSEGGCDDVVMSAVASALSLYPTNKSPIYVITDATPNDSAEKETVFHLESYWRAPIYFIYVQPSPADGCNSSPDNSAYRDMVDMAARSSGNTFYFSDRSTISTFFYRHMLNTLFRSQLVLSGDYSHCSSQNLYKSAAFDLSVDYVTIVATGTNLTLVVTSPTGQYPTFNTAFSDGVNYVWTYNSPVAGQWFFSIRSLEPEAACTFKVYQKKFNFGGQTQYSPDYDIFWSFASTLTSAAGVLRQPVLGFDSSPVFHVTNYPQFLSMDRVHANLQIYAIRDGVQTEVYGSSGMYRDACEFNFYFPPFTCRVPEEVLYFNFFARDNNDMALQRAGTMFCAAVHPTPPPDHQCQNGGVMNPSNTTCFCTPEFTGTYCQNIICYNGGTASGDHCVCPPGYAGESCEMARCIETGPNPEFIRYGVDMVFAVEITQNSIASLSMLNINFQEILRDVLMQNRGWIRNFVLVGFNSTWGGPIAESPADNLTAITTALRTLASSVPADTGCTVKLWDALNYAIFSRQMAPGSFVEIFQTTPEDDTDTRSLGLFYDMSRTMELVLYGFLTSNPRLQPEGFVCNATVENYYTLLGIVSGSTGTTYSLQANEISNAVRLIPLQFSNGQVTFNALDDCRHDDGLITYFPVDAYTQTIQIQTFGYGTTIQVYTGAGVMAEALELFYDDFTGQSVYEIRKACDEGWEPIGQYCIKFMATVENILPMPQAKAFCASAGGFLVDDLTDDKNGFLKSVAANTQFWTGLFKNNDGQFYWDRGTGINPDLLNQPITYWADGEPSDDPTRQCVYFNGRSGDANKVWTTDTCAEPRAFACQKHRYDADHRPNVIGDDDLPAGWWYAKVKSNPPSGYPNMCTMSVRVQSSLQIVTGFSTKIGNDFPLPDPIQDSTENRLISYVHSVDNENRVPILTDAILWDAYNGTFYNGLKYQVRFGCQFAWVTQDFPCPNGDSQANEFGVLHVGEDEFGNTFQRLTFGHCSRAQITCGNGGIRQNGQCVCTDYWTGSRCTVPICVNGGTRNPDEATCSCPDGYEGPNCQFEVCQPNVPQLFSNDRKSLLMVVETTRQNSDTVNQLIANLKNIVSAVTNNMPLWFTNFGLVTFDTTGRTFEKFDYTSIDDLITDLTTQSNAISTDGVCSMPYLGVLAHLLEHDDVIAMPNSEIFLVTPAGPSDLGNYVETMEVLFNTQAHLHYVVSKTANCATFDGVNNVRDMTWLGYGSSGNILFTDPANIVNLFNSYLPTLYGASVLQDPTGITNYTCSDGSLPWFVPVDINTTFIYVTTSAEFGSLSVKDPLGAAHSATPVYNVNDQKIYAIEVDRLGGIWTLQLVQPPGLCLAHVYSTGGAKVYTKFSMPNPIGGKPDPLGSHQDGRFVQPTAGFDNVAVFHLAGNPFHRGQLQYVEIFDIGANSITNILRSELYVRAGCSYEYYSDLFTCNGDMIAVYVHGVDEANQKFRRQEIVICNGRSPTTNQPATGTIGPITMPTQQTALTQGPVTQQTQVPGTQPTQGPVATTQNPYTSAQFDVVFMIDGSQSAQSSFDSLTKFVQTFMVSFNVGQSGARVGLIVVGGDITNPIPPAANLNSLSSQAMLNSNLAQLSGGYTDFEDAGQILNYTLQIVSSPDFMAANNGYRSGISNHVLIYLTTTTAFDTDPTPAAQTILAQKQYGIITIGYGGATDNNKLQTISGGSACSFTAPDFASLNNQIKTIQQLILNANANGGVYCINN.

The N-terminal stretch at 1–16 (MRNWVLIAALAVICLA) is a signal peptide. EGF-like domains are found at residues 370 to 405 (SGSTCSQMLCANGGFLPTPTSDRCQCPEGFSGFHCQ) and 864 to 896 (TGTYCQNIICYNGGTASGDHCVCPPGYAGESCE). 8 cysteine pairs are disulfide-bonded: Cys379/Cys393, Cys395/Cys404, Cys868/Cys873, Cys886/Cys895, Cys1212/Cys1312, Cys1285/Cys1304, Cys1508/Cys1521, and Cys1523/Cys1532. The 126-residue stretch at 1188–1313 (IGQYCIKFMA…CAEPRAFACQ (126 aa)) folds into the C-type lectin domain. Positions 1499–1533 (TGSRCTVPICVNGGTRNPDEATCSCPDGYEGPNCQ) constitute an EGF-like 3 domain. The region spanning 2016–2202 (DVVFMIDGSQ…NNQIKTIQQL (187 aa)) is the VWFA domain.

It localises to the secreted. Plays a role in innate immunity, probably via the atf-7 pathway, to confer resistance to pathogenic bacteria. May also play a role in the regulation of longevity. This Caenorhabditis elegans protein is Protein irg-7.